The primary structure comprises 169 residues: Large ribosomal subunit protein uL5 (169 aa).

This sequence belongs to the universal ribosomal protein uL5 family. Part of the 50S ribosomal subunit; contacts the 5S rRNA and probably tRNA. Forms a bridge to the 30S subunit in the 70S ribosome.

This is one of the proteins that bind and probably mediate the attachment of the 5S RNA into the large ribosomal subunit, where it forms part of the central protuberance. In the 70S ribosome it contacts protein S13 of the 30S subunit (bridge B1b), connecting the 2 subunits; this bridge is implicated in subunit movement. May contact the P site tRNA; the 5S rRNA and some of its associated proteins might help stabilize positioning of ribosome-bound tRNAs. In Methanosarcina mazei (strain ATCC BAA-159 / DSM 3647 / Goe1 / Go1 / JCM 11833 / OCM 88) (Methanosarcina frisia), this protein is Large ribosomal subunit protein uL5.